The primary structure comprises 207 residues: Large ribosomal subunit protein uL4 (207 aa).

The disordered stretch occupies residues 49 to 78; the sequence is HAVKNRSAVSGGGRKPWRQKGTGRARQGSI.

This sequence belongs to the universal ribosomal protein uL4 family. In terms of assembly, part of the 50S ribosomal subunit.

Functionally, one of the primary rRNA binding proteins, this protein initially binds near the 5'-end of the 23S rRNA. It is important during the early stages of 50S assembly. It makes multiple contacts with different domains of the 23S rRNA in the assembled 50S subunit and ribosome. Its function is as follows. Forms part of the polypeptide exit tunnel. The sequence is that of Large ribosomal subunit protein uL4 from Streptococcus gordonii (strain Challis / ATCC 35105 / BCRC 15272 / CH1 / DL1 / V288).